The primary structure comprises 90 residues: Small ribosomal subunit protein bS18 (90 aa).

The protein belongs to the bacterial ribosomal protein bS18 family. Part of the 30S ribosomal subunit. Forms a tight heterodimer with protein bS6.

Functionally, binds as a heterodimer with protein bS6 to the central domain of the 16S rRNA, where it helps stabilize the platform of the 30S subunit. This chain is Small ribosomal subunit protein bS18, found in Polynucleobacter asymbioticus (strain DSM 18221 / CIP 109841 / QLW-P1DMWA-1) (Polynucleobacter necessarius subsp. asymbioticus).